A 101-amino-acid chain; its full sequence is DET1- and DDB1-associated protein 1 (101 aa).

The disordered stretch occupies residues 67-101 (NAAKKRDQDQLEIGETSAPPRKIARTDSQEMSEDT).

Belongs to the DDA1 family. As to quaternary structure, component of numerous DCX (DDB1-CUL4-X-box) E3 ubiquitin-protein ligase complexes which consist of a core of DDB1, cullin-4 (CUL4A or CUL4B), DDA1 and RBX1.

Its pathway is protein modification; protein ubiquitination. Functionally, functions as a component of numerous distinct DCX (DDB1-CUL4-X-box) E3 ubiquitin-protein ligase complexes which mediate the ubiquitination and subsequent proteasomal degradation of target proteins. In the DCX complexes, acts as a scaffolding subunit required to stabilize the complex. The sequence is that of DET1- and DDB1-associated protein 1 from Xenopus tropicalis (Western clawed frog).